A 490-amino-acid polypeptide reads, in one-letter code: Inosine-5'-monophosphate dehydrogenase (490 aa).

CBS domains are found at residues 96 to 154 and 158 to 218; these read MIIN…SKPV and MTKE…CKDE. Residues aspartate 252 and 302-304 each bind NAD(+); that span reads GVG. The K(+) site is built by glycine 304 and glycine 306. Serine 307 serves as a coordination point for IMP. Cysteine 309 is a K(+) binding site. The Thioimidate intermediate role is filled by cysteine 309. IMP is bound by residues 342 to 344, 365 to 366, and 389 to 393; these read DGG, GN, and YRGMG. Arginine 406 (proton acceptor) is an active-site residue. Position 418 (glutamate 418) interacts with IMP. Positions 472, 473, and 474 each coordinate K(+).

This sequence belongs to the IMPDH/GMPR family. As to quaternary structure, homotetramer. It depends on K(+) as a cofactor.

It carries out the reaction IMP + NAD(+) + H2O = XMP + NADH + H(+). It participates in purine metabolism; XMP biosynthesis via de novo pathway; XMP from IMP: step 1/1. With respect to regulation, mycophenolic acid (MPA) is a non-competitive inhibitor that prevents formation of the closed enzyme conformation by binding to the same site as the amobile flap. In contrast, mizoribine monophosphate (MZP) is a competitive inhibitor that induces the closed conformation. MPA is a potent inhibitor of mammalian IMPDHs but a poor inhibitor of the bacterial enzymes. MZP is a more potent inhibitor of bacterial IMPDH. Catalyzes the conversion of inosine 5'-phosphate (IMP) to xanthosine 5'-phosphate (XMP), the first committed and rate-limiting step in the de novo synthesis of guanine nucleotides, and therefore plays an important role in the regulation of cell growth. The protein is Inosine-5'-monophosphate dehydrogenase of Aquifex aeolicus (strain VF5).